The chain runs to 273 residues: Dermonecrotic toxin LsaSicTox-alphaIB1avi (273 aa).

The active site involves His5. Glu25 and Asp27 together coordinate Mg(2+). The Nucleophile role is filled by His41. Disulfide bonds link Cys45-Cys51 and Cys47-Cys190. Asp85 is a Mg(2+) binding site.

Belongs to the arthropod phospholipase D family. Class II subfamily. The cofactor is Mg(2+). Expressed by the venom gland.

It localises to the secreted. It catalyses the reaction an N-(acyl)-sphingosylphosphocholine = an N-(acyl)-sphingosyl-1,3-cyclic phosphate + choline. The catalysed reaction is an N-(acyl)-sphingosylphosphoethanolamine = an N-(acyl)-sphingosyl-1,3-cyclic phosphate + ethanolamine. The enzyme catalyses a 1-acyl-sn-glycero-3-phosphocholine = a 1-acyl-sn-glycero-2,3-cyclic phosphate + choline. It carries out the reaction a 1-acyl-sn-glycero-3-phosphoethanolamine = a 1-acyl-sn-glycero-2,3-cyclic phosphate + ethanolamine. Functionally, dermonecrotic toxins cleave the phosphodiester linkage between the phosphate and headgroup of certain phospholipids (sphingolipid and lysolipid substrates), forming an alcohol (often choline) and a cyclic phosphate. This toxin acts on sphingomyelin (SM). It may also act on ceramide phosphoethanolamine (CPE), lysophosphatidylcholine (LPC) and lysophosphatidylethanolamine (LPE), but not on lysophosphatidylserine (LPS), and lysophosphatidylglycerol (LPG). It acts by transphosphatidylation, releasing exclusively cyclic phosphate products as second products. Induces dermonecrosis, hemolysis, increased vascular permeability, edema, inflammatory response, and platelet aggregation. This chain is Dermonecrotic toxin LsaSicTox-alphaIB1avi, found in Loxosceles sabina (Tucson recluse spider).